A 156-amino-acid polypeptide reads, in one-letter code: Deoxyuridine 5'-triphosphate nucleotidohydrolase (156 aa).

Substrate-binding positions include 76 to 78 (RSG), N89, 93 to 95 (TVD), and K103.

This sequence belongs to the dUTPase family. Requires Mg(2+) as cofactor.

It carries out the reaction dUTP + H2O = dUMP + diphosphate + H(+). It participates in pyrimidine metabolism; dUMP biosynthesis; dUMP from dCTP (dUTP route): step 2/2. Functionally, this enzyme is involved in nucleotide metabolism: it produces dUMP, the immediate precursor of thymidine nucleotides and it decreases the intracellular concentration of dUTP so that uracil cannot be incorporated into DNA. The protein is Deoxyuridine 5'-triphosphate nucleotidohydrolase of Agrobacterium fabrum (strain C58 / ATCC 33970) (Agrobacterium tumefaciens (strain C58)).